We begin with the raw amino-acid sequence, 317 residues long: Cell division protein FtsX (317 aa).

Topologically, residues 1–39 (MAIVRHKQPPLRRFMMYWVDHARQAFSSLGELWRNPLAS) are cytoplasmic. Residues 40 to 60 (LMTLAVLGVSLALPSCFHVLL) traverse the membrane as a helical segment. The Periplasmic portion of the chain corresponds to 61-188 (KNAEVVEGSW…LQGIMNLLRH (128 aa)). A helical transmembrane segment spans residues 189-209 (TITGIAVLLLSAVLLIVGNTL). The Cytoplasmic segment spans residues 210 to 241 (RLNILNQRSEIEVLKLVGATDAFIHRPFLYTG). The chain crosses the membrane as a helical span at residues 242-262 (IWFGVIGGMLAWWLTEVMVIW). Over 263-280 (SEGVVNELAGLYNSNFRL) the chain is Periplasmic. The helical transmembrane segment at 281–301 (VGMGAVDGINLILLGALLGLI) threads the bilayer. The Cytoplasmic segment spans residues 302 to 317 (ASWFSVHRHIRDIEPS).

It belongs to the ABC-4 integral membrane protein family. FtsX subfamily. As to quaternary structure, forms a membrane-associated complex with FtsE.

The protein resides in the cell inner membrane. Functionally, part of the ABC transporter FtsEX involved in cellular division. Encoded in an operon consisting of genes ftsY, ftsE and ftsX. In Aeromonas hydrophila, this protein is Cell division protein FtsX.